The chain runs to 232 residues: Uracil-DNA glycosylase (232 aa).

The active-site Proton acceptor is the D71.

The protein belongs to the uracil-DNA glycosylase (UDG) superfamily. UNG family.

The protein resides in the cytoplasm. The catalysed reaction is Hydrolyzes single-stranded DNA or mismatched double-stranded DNA and polynucleotides, releasing free uracil.. Functionally, excises uracil residues from the DNA which can arise as a result of misincorporation of dUMP residues by DNA polymerase or due to deamination of cytosine. The chain is Uracil-DNA glycosylase from Azotobacter vinelandii (strain DJ / ATCC BAA-1303).